The chain runs to 842 residues: Oxysterol-binding protein-related protein 7 (842 aa).

Residues 1–28 (MDFQERDPPFLPESAQSSKPSSAQQASE) form a disordered region. Low complexity predominate over residues 14-27 (SAQSSKPSSAQQAS). The PH domain occupies 47 to 142 (PERQEGHLLK…WVAQLRAHRL (96 aa)). At threonine 171 the chain carries Phosphothreonine. A phosphoserine mark is found at serine 217, serine 226, serine 256, and serine 272. Residues 330-369 (DMHQGSELSRMGVSEASTGQRRLHSLSTSSDTTADSFSSL) are disordered. The span at 354–369 (SLSTSSDTTADSFSSL) shows a compositional bias: low complexity.

This sequence belongs to the OSBP family. In terms of tissue distribution, expressed in epithelium of small and large intestines (at protein level). Expressed in stomach, duodenum, jejunum, ascending colon, spleen, thymus, lymph node, trachea and leukocytes.

The protein localises to the cytoplasm. It localises to the cytosol. Its subcellular location is the endoplasmic reticulum membrane. The protein resides in the cell membrane. The protein is Oxysterol-binding protein-related protein 7 (OSBPL7) of Homo sapiens (Human).